Here is a 433-residue protein sequence, read N- to C-terminus: Tol-Pal system protein TolB (433 aa).

An N-terminal signal peptide occupies residues 1–21; the sequence is MRNLLRGMLVVICCMAGIAAA.

The protein belongs to the TolB family. As to quaternary structure, the Tol-Pal system is composed of five core proteins: the inner membrane proteins TolA, TolQ and TolR, the periplasmic protein TolB and the outer membrane protein Pal. They form a network linking the inner and outer membranes and the peptidoglycan layer.

The protein localises to the periplasm. Functionally, part of the Tol-Pal system, which plays a role in outer membrane invagination during cell division and is important for maintaining outer membrane integrity. This Pseudomonas fluorescens (strain SBW25) protein is Tol-Pal system protein TolB.